The primary structure comprises 159 residues: Cyclic pyranopterin monophosphate synthase (159 aa).

Substrate-binding positions include 76–78 (LCH) and 114–115 (ME). The active site involves D129.

This sequence belongs to the MoaC family. In terms of assembly, homohexamer; trimer of dimers.

It catalyses the reaction (8S)-3',8-cyclo-7,8-dihydroguanosine 5'-triphosphate = cyclic pyranopterin phosphate + diphosphate. It participates in cofactor biosynthesis; molybdopterin biosynthesis. In terms of biological role, catalyzes the conversion of (8S)-3',8-cyclo-7,8-dihydroguanosine 5'-triphosphate to cyclic pyranopterin monophosphate (cPMP). The protein is Cyclic pyranopterin monophosphate synthase of Clostridium botulinum (strain Alaska E43 / Type E3).